Reading from the N-terminus, the 287-residue chain is Large ribosomal subunit protein uL2 (287 aa).

Positions 221–287 (RGSVMNPCDH…SKRSRGGRDS (67 aa)) are disordered. Positions 258–287 (KTRKKNKPSNKLVVRRRRRISKRSRGGRDS) are enriched in basic residues.

Belongs to the universal ribosomal protein uL2 family. In terms of assembly, part of the 50S ribosomal subunit. Forms a bridge to the 30S subunit in the 70S ribosome.

Its function is as follows. One of the primary rRNA binding proteins. Required for association of the 30S and 50S subunits to form the 70S ribosome, for tRNA binding and peptide bond formation. It has been suggested to have peptidyltransferase activity; this is somewhat controversial. Makes several contacts with the 16S rRNA in the 70S ribosome. The polypeptide is Large ribosomal subunit protein uL2 (Prochlorococcus marinus (strain MIT 9301)).